Here is a 439-residue protein sequence, read N- to C-terminus: Vacuolar protein sorting-associated protein 4 (439 aa).

Residues 8–75 form the MIT domain; sequence LSKGIDLVQK…TRAEQLKDHL (68 aa). A disordered region spans residues 76–113; that stretch reads EKQAQNKSTAESSVNGSTKAKKSNGDGNGSGDDNDDAD. Positions 80-93 are enriched in polar residues; sequence QNKSTAESSVNGST. 175 to 182 provides a ligand contact to ATP; it reads GPPGTGKS.

It belongs to the AAA ATPase family. In terms of assembly, monomer or homodimer (in nucleotide-free form). Decamer, dodecamer or tetradecamer of two stacked respective homooligomeric rings (when bound to ATP); the dodecameric form seems to be predominant.

It is found in the endosome membrane. Its function is as follows. Pre-vacuolar protein sorting protein involved in the transport of biosynthetic membrane proteins from the prevacuolar/endosomal compartment to the vacuole. Required for multivesicular body (MVB) protein sorting. Catalyzes the ATP-dependent dissociation of class E VPS proteins from endosomal membranes, such as the disassembly of the ESCRT-III complex. Required for extracellular secretion of the secreted aspartyl proteases SAP2, SAP4, SAP5, and SAP6. Its regulation of the pre-vacuolar secretory pathway is critical for virulence. The protein is Vacuolar protein sorting-associated protein 4 of Candida albicans (strain SC5314 / ATCC MYA-2876) (Yeast).